The primary structure comprises 502 residues: Neuronal acetylcholine receptor subunit alpha-7 (502 aa).

Positions 1-22 are cleaved as a signal peptide; the sequence is MRCSPGGVWLALAASLLHVSLQ. Residues 23-233 are Extracellular-facing; that stretch reads GEFQRKLYKE…VTMRRRTLYY (211 aa). 2 residues coordinate Ca(2+): Arg-42 and Val-44. 3 N-linked (GlcNAc...) asparagine glycosylation sites follow: Asn-46, Asn-90, and Asn-133. A disulfide bridge links Cys-150 with Cys-164. Positions 172 and 210 each coordinate Ca(2+). A disulfide bridge links Cys-212 with Cys-213. The next 3 helical transmembrane spans lie at 234-254, 259-279, and 292-315; these read GLNL…VFLL, GEKI…MLLV, and LIAQ…VIVL. Residues 260-267 form an essential for TMEM35A/NACHO-mediated proper subunit assembly and trafficking to cell membrane region; the sequence is EKISLGIT. Residues 316–466 are Cytoplasmic-facing; it reads QYHHHDPDGG…CSEWKFAACV (151 aa). The helical transmembrane segment at 467–489 threads the bilayer; the sequence is VDRLCLMAFSVFTIICTIGILMS.

This sequence belongs to the ligand-gated ion channel (TC 1.A.9) family. Acetylcholine receptor (TC 1.A.9.1) subfamily. Alpha-7/CHRNA7 sub-subfamily. Homopentamer. Can also form heteropentamers with CHRNB2, mainly found in basal forebrain cholinergic neurons. Interacts with RIC3; which is required for proper folding and assembly. Interacts with LYPD6. Interacts with CANX. Post-translationally, glycosylations at Asn-46, Asn-90 and Asn-133 are essential for TMEM35A/NACHO-mediated proper subunit assembly and trafficking to the cell membrane. Expressed in neuronal cells. Expressed in macrophages (at protein level).

It localises to the postsynaptic cell membrane. It is found in the cell membrane. It catalyses the reaction Ca(2+)(in) = Ca(2+)(out). The catalysed reaction is K(+)(in) = K(+)(out). It carries out the reaction Na(+)(in) = Na(+)(out). The enzyme catalyses choline(out) = choline(in). It catalyses the reaction NH4(+)(in) = NH4(+)(out). The catalysed reaction is L-arginine(in) = L-arginine(out). It carries out the reaction guanidine(out) = guanidine(in). Its activity is regulated as follows. Activated by a myriad of ligands such as acetylcholine, cytisine, nicotine, choline and epibatidine. Oligomeric amyloid-beta protein 42 activates specifially CHRNA7:CHRNB2 nAchRs. Activity is modulated by positive allosteric modulators (PAMs), such as flavonoids, with a wide range of chemical diversity, pharmacological sensitivity and efficacy. AChR activity is inhibited by the antagonists alpha-conotoxons RgIA, ImI and ImII, small disulfide-constrained peptides from cone snails. Alpha-conotoxin PnIC selectively inhibits CHRNA7:CHRNB2 over CHRNA7 homopentamer. Its function is as follows. Component of neuronal acetylcholine receptors (nAChRs) that function as pentameric, ligand-gated cation channels with high calcium permeability among other activities. nAChRs are excitatory neurotrasnmitter receptors formed by a collection of nAChR subunits known to mediate synaptic transmission in the nervous system and the neuromuscular junction. Each nAchR subunit confers differential attributes to channel properties, including activation, deactivation and desensitization kinetics, pH sensitivity, cation permeability, and binding to allosteric modulators. CHRNA7 forms homopentameric neuronal acetylcholine receptors abundantly expressed in the central nervous system, characterized by fast desensitization and high calcium permeability. Also forms heteropentamers with CHRNB2, mainly expressed in basal forebrain cholinergic neurons. Involved in the modulation of calcium-dependent signaling pathways and influences the release of neurotransmitters, including dopamine, glutamate and GABA. Also expressed in non-neuronal cells such as immune cells like lymphocytes, monocytes and macrophages. In T cells, activation induces metabotropic signaling that results in an increase of intracellular Ca2+ concentrations, independent of ionotropic receptor functions. In macrophages, required for acetylcholine-mediated inhibition of TNF and other inflammatory cytokine release. Once activated by acetylcholine, nicotine or other agonists, selectively inhibits production of pro-inflammatory cytokines while leaving anti-inflammatory cytokines undisturbed. Stimulates the cholinergic anti-inflammatory pathway, controlling inflammation by inhibiting NFKB nuclear translocation and activating the JAK2-STAT3 pathway, independently of ion channel activity. Also expressed in the urothelium where it modulates reflex bladder activity by increasing intracellular calcium through internal stores and decreasing basal ATP release. This chain is Neuronal acetylcholine receptor subunit alpha-7, found in Homo sapiens (Human).